Consider the following 286-residue polypeptide: Shikimate dehydrogenase (NADP(+)) (286 aa).

Residues Ser-22–Ser-24 and Thr-69 contribute to the shikimate site. The active-site Proton acceptor is the Lys-73. Glu-85 provides a ligand contact to NADP(+). Residues Asn-94 and Asp-109 each coordinate shikimate. Residues Gly-133–Ala-137 and Val-231 contribute to the NADP(+) site. Residue Tyr-233 coordinates shikimate. Residue Gly-254 participates in NADP(+) binding.

This sequence belongs to the shikimate dehydrogenase family. In terms of assembly, homodimer.

The enzyme catalyses shikimate + NADP(+) = 3-dehydroshikimate + NADPH + H(+). It functions in the pathway metabolic intermediate biosynthesis; chorismate biosynthesis; chorismate from D-erythrose 4-phosphate and phosphoenolpyruvate: step 4/7. Its function is as follows. Involved in the biosynthesis of the chorismate, which leads to the biosynthesis of aromatic amino acids. Catalyzes the reversible NADPH linked reduction of 3-dehydroshikimate (DHSA) to yield shikimate (SA). The chain is Shikimate dehydrogenase (NADP(+)) from Alkaliphilus metalliredigens (strain QYMF).